A 238-amino-acid polypeptide reads, in one-letter code: Gas vesicle protein F (238 aa).

This sequence belongs to the gas vesicle GvpF/GvpL family. As to quaternary structure, binds GvpA.

It is found in the gas vesicle. In terms of biological role, a minor component of the gas vesicle, may be involved in preventing GvpA aggregation during gas vesicle nucleation. Gas vesicles are hollow, gas filled proteinaceous nanostructures found in some microorganisms. It is not clear what function gas vesicles perform in soil bacteria. In Streptomyces sp. (strain CB03234), this protein is Gas vesicle protein F.